The following is a 60-amino-acid chain: Large ribosomal subunit protein uL30 (60 aa).

The protein belongs to the universal ribosomal protein uL30 family. Part of the 50S ribosomal subunit.

The sequence is that of Large ribosomal subunit protein uL30 from Syntrophomonas wolfei subsp. wolfei (strain DSM 2245B / Goettingen).